We begin with the raw amino-acid sequence, 262 residues long: UPF0758 protein R01728 (262 aa).

A disordered region spans residues 23–44 (PEKRTRNSPATAPAPATDTHYH). The segment covering 31–40 (PATAPAPATD) has biased composition (low complexity). One can recognise an MPN domain in the interval 140-262 (VLSSWSAVID…HVSLKGLRLF (123 aa)). Positions 211, 213, and 224 each coordinate Zn(2+). Positions 211–224 (HNHPSGDPTPSRAD) match the JAMM motif motif.

The protein belongs to the UPF0758 family.

In Rhizobium meliloti (strain 1021) (Ensifer meliloti), this protein is UPF0758 protein R01728.